A 271-amino-acid polypeptide reads, in one-letter code: RxLR effector protein PITG_15679 (271 aa).

Residues 1–18 (MKVLQLIALTALVSSCVA) form the signal peptide. The short motif at 49–69 (RSLRRYDLEGLDSVNSNREER) is the RxLR-dEER element. The Nudix hydrolase domain maps to 212–271 (RLLSANVVMRLNDKGEKQILLISSSNPKKGDFLLPKGGWDKGEDVKKAALREVIEEGGVR). The short motif at 248 to 269 (GGWDKGEDVKKAALREVIEEGG) is the Nudix box element.

The protein in the N-terminal section; belongs to the RxLR effector family. In the C-terminal section; belongs to the Nudix hydrolase family.

It is found in the secreted. It localises to the host cytoplasm. The protein localises to the host nucleus. Effector that enhances P.infestans colonization of Nicotiana benthamiana leaves. This chain is RxLR effector protein PITG_15679, found in Phytophthora infestans (strain T30-4) (Potato late blight agent).